Consider the following 577-residue polypeptide: MPSKAPRKSLSVSFVWTFSILAVLRLTSASFRVIDDCDEVYNYWEPLHYLLYGYGLQTWEYSPEYAIRSWFYIALHAVPGFLARGLGLSRLHVFYFIRGVLACFSAFCETNLILAVARNFNRAVALHLTSVLFVNSGMWSASTSFLPSSFAMNMVTLALSAQLSPPSTKRTVKVVSFITIGAVIGWPFSAALSIPFILLELVDLKGRFRHLFCRWFKAIFVALLITGICITVDSLFYHRIQFVAWNIVKYNVLAKDGRGPDIYGTEPWWYYFANLSLQHNIVLWFAMACGPLVLLAAFTNWINLDSFLDLSSVISPFYIWLFIFIIQPHKEERFMYPIYPVLCLAAAIGLDMSLKLMIQILSSINETVRSKFPVRFVVLCVYAIIGCLSIARILAIQNYNAPMIIYPAISFLETDNNVTTNVCVGKEWYRYPSTFFLPDNSRLKFVKSEFDGILPGEFVESNSTWWNREGYYQIPEHMNEFNNEEPTRYTSLESCDFLIDLEFDHSKATVNEPIYSKSDGWIPVMVYPFIDTKQTPFMGRAFAVPFIEPKWGRYEILVKKPVKIDFSNLRRASKQQA.

The signal sequence occupies residues methionine 1 to alanine 29. Over serine 30–arginine 68 the chain is Extracellular. A helical transmembrane segment spans residues serine 69–serine 89. At arginine 90–tyrosine 95 the chain is on the cytoplasmic side. The helical transmembrane segment at phenylalanine 96 to valine 116 threads the bilayer. The Extracellular segment spans residues alanine 117–serine 136. A helical membrane pass occupies residues glycine 137–leucine 159. Topologically, residues serine 160–serine 176 are cytoplasmic. A helical membrane pass occupies residues phenylalanine 177–isoleucine 197. Residues leucine 198 to lysine 217 lie on the Extracellular side of the membrane. The helical transmembrane segment at alanine 218–histidine 238 threads the bilayer. At arginine 239–asparagine 280 the chain is on the cytoplasmic side. A helical membrane pass occupies residues isoleucine 281–tryptophan 301. Over isoleucine 302 to aspartate 305 the chain is Extracellular. The chain crosses the membrane as a helical span at residues serine 306–isoleucine 326. Topologically, residues glutamine 327–arginine 333 are cytoplasmic. A helical transmembrane segment spans residues phenylalanine 334–leucine 354. The Extracellular portion of the chain corresponds to lysine 355–arginine 375. Residues phenylalanine 376–isoleucine 396 form a helical membrane-spanning segment. The Cytoplasmic portion of the chain corresponds to glutamine 397–alanine 577.

This sequence belongs to the glycosyltransferase 22 family.

The protein localises to the endoplasmic reticulum membrane. The catalysed reaction is an alpha-D-Man-(1-&gt;2)-alpha-D-Man-(1-&gt;2)-alpha-D-Man-(1-&gt;3)-[alpha-D-Man-(1-&gt;3)-alpha-D-Man-(1-&gt;6)]-beta-D-Man-(1-&gt;4)-beta-D-GlcNAc-(1-&gt;4)-alpha-D-GlcNAc-diphospho-di-trans,poly-cis-dolichol + a di-trans,poly-cis-dolichyl beta-D-mannosyl phosphate = an alpha-D-Man-(1-&gt;2)-alpha-D-Man-(1-&gt;2)-alpha-D-Man-(1-&gt;3)-[alpha-D-Man-(1-&gt;2)-alpha-D-Man-(1-&gt;3)-alpha-D-Man-(1-&gt;6)]-beta-D-Man-(1-&gt;4)-beta-D-GlcNAc-(1-&gt;4)-alpha-D-GlcNAc-diphospho-di-trans,poly-cis-dolichol + a di-trans,poly-cis-dolichyl phosphate + H(+). It catalyses the reaction an alpha-D-Man-(1-&gt;2)-alpha-D-Man-(1-&gt;2)-alpha-D-Man-(1-&gt;3)-[alpha-D-Man-(1-&gt;2)-alpha-D-Man-(1-&gt;3)-[alpha-D-Man-(1-&gt;6)]-alpha-D-Man-(1-&gt;6)]-beta-D-Man-(1-&gt;4)-beta-D-GlcNAc-(1-&gt;4)-alpha-D-GlcNAc-diphospho-di-trans,poly-cis-dolichol + a di-trans,poly-cis-dolichyl beta-D-mannosyl phosphate = an alpha-D-Man-(1-&gt;2)-alpha-D-Man-(1-&gt;2)-alpha-D-Man-(1-&gt;3)-[alpha-D-Man-(1-&gt;2)-alpha-D-Man-(1-&gt;3)-[alpha-D-Man-(1-&gt;2)-alpha-D-Man-(1-&gt;6)]-alpha-D-Man-(1-&gt;6)]-beta-D-Man-(1-&gt;4)-beta-D-GlcNAc-(1-&gt;4)-alpha-D-GlcNAc-diphospho-di-trans,poly-cis-dolichol + a di-trans,poly-cis-dolichyl phosphate + H(+). It participates in protein modification; protein glycosylation. Catalyzes the transfer of mannose from Dol-P-Man to lipid-linked oligosaccharides. This is Alpha-1,2-mannosyltransferase alg9 (alg9) from Schizosaccharomyces pombe (strain 972 / ATCC 24843) (Fission yeast).